Here is a 420-residue protein sequence, read N- to C-terminus: Serine hydroxymethyltransferase (420 aa).

(6S)-5,6,7,8-tetrahydrofolate contacts are provided by residues L121 and 125–127; that span reads GHL. K229 is modified (N6-(pyridoxal phosphate)lysine).

The protein belongs to the SHMT family. As to quaternary structure, homodimer. The cofactor is pyridoxal 5'-phosphate.

The protein localises to the cytoplasm. It catalyses the reaction (6R)-5,10-methylene-5,6,7,8-tetrahydrofolate + glycine + H2O = (6S)-5,6,7,8-tetrahydrofolate + L-serine. It functions in the pathway one-carbon metabolism; tetrahydrofolate interconversion. It participates in amino-acid biosynthesis; glycine biosynthesis; glycine from L-serine: step 1/1. Its function is as follows. Catalyzes the reversible interconversion of serine and glycine with tetrahydrofolate (THF) serving as the one-carbon carrier. This reaction serves as the major source of one-carbon groups required for the biosynthesis of purines, thymidylate, methionine, and other important biomolecules. Also exhibits THF-independent aldolase activity toward beta-hydroxyamino acids, producing glycine and aldehydes, via a retro-aldol mechanism. This chain is Serine hydroxymethyltransferase, found in Aggregatibacter actinomycetemcomitans (Actinobacillus actinomycetemcomitans).